A 151-amino-acid chain; its full sequence is Large ribosomal subunit protein bL9 (151 aa).

It belongs to the bacterial ribosomal protein bL9 family.

Functionally, binds to the 23S rRNA. The chain is Large ribosomal subunit protein bL9 from Mycoplasmopsis agalactiae (strain NCTC 10123 / CIP 59.7 / PG2) (Mycoplasma agalactiae).